The chain runs to 141 residues: Large ribosomal subunit protein uL13 (141 aa).

The protein belongs to the universal ribosomal protein uL13 family. Part of the 50S ribosomal subunit.

This protein is one of the early assembly proteins of the 50S ribosomal subunit, although it is not seen to bind rRNA by itself. It is important during the early stages of 50S assembly. The protein is Large ribosomal subunit protein uL13 of Helicobacter acinonychis (strain Sheeba).